A 270-amino-acid chain; its full sequence is Glucosamine-6-phosphate deaminase (270 aa).

Asp-72 serves as the catalytic Proton acceptor; for enolization step. The active-site For ring-opening step is the Asp-141. Catalysis depends on His-143, which acts as the Proton acceptor; for ring-opening step. Glu-148 (for ring-opening step) is an active-site residue.

This sequence belongs to the glucosamine/galactosamine-6-phosphate isomerase family. NagB subfamily.

The enzyme catalyses alpha-D-glucosamine 6-phosphate + H2O = beta-D-fructose 6-phosphate + NH4(+). The protein operates within amino-sugar metabolism; N-acetylneuraminate degradation; D-fructose 6-phosphate from N-acetylneuraminate: step 5/5. Allosterically activated by N-acetylglucosamine 6-phosphate (GlcNAc6P). Catalyzes the reversible isomerization-deamination of glucosamine 6-phosphate (GlcN6P) to form fructose 6-phosphate (Fru6P) and ammonium ion. The sequence is that of Glucosamine-6-phosphate deaminase from Treponema denticola (strain ATCC 35405 / DSM 14222 / CIP 103919 / JCM 8153 / KCTC 15104).